The sequence spans 98 residues: Protein S100-A11 (98 aa).

Thr-5 is modified (phosphothreonine). EF-hand domains follow at residues 8–44 (CIESLIAVFQKYSGKDGNNTQLSKTEFLSFMNTELAA) and 50–85 (KDPGVLDRMMKKLDLNCDGQLDFQEFLNLIGGLAIA). Position 22 is an N6-acetyllysine (Lys-22). Ca(2+)-binding residues include Asn-26, Gln-28, Glu-33, Asp-63, Asn-65, Asp-67, Gln-69, and Glu-74.

This sequence belongs to the S-100 family. Homodimer; disulfide-linked. Post-translationally, phosphorylation at Thr-5 significantly suppresses homodimerization and promotes association with NCL/nucleolin which induces nuclear translocation.

Its subcellular location is the cytoplasm. It is found in the nucleus. In terms of biological role, facilitates the differentiation and the cornification of keratinocytes. The chain is Protein S100-A11 (S100a11) from Mus musculus (Mouse).